The following is a 230-amino-acid chain: Modulator of macroautophagy TMEM150B-A (230 aa).

Position 1 (M1) is a topological domain, cytoplasmic. A helical membrane pass occupies residues 2-22; the sequence is WAWALLPICLTIWATAGIWIV. The Extracellular portion of the chain corresponds to 23-50; that stretch reads YGMSVSNGSVNLSDGFPYISLCGTDPPQ. Residues N29 and N33 are each glycosylated (N-linked (GlcNAc...) asparagine). A helical transmembrane segment spans residues 51 to 71; that stretch reads SCVFGQVLNVGAMLGVWISAI. Residues 72–83 lie on the Cytoplasmic side of the membrane; it reads RFQQIRDYNCHS. A helical transmembrane segment spans residues 84 to 104; it reads VLNSVSLAMGILCALGTSIVG. Over 105-115 the chain is Extracellular; it reads NFQQSNQLETH. Residues 116–136 form a helical membrane-spanning segment; the sequence is LAGAFLAFVIGNIYFWMQTAL. Over 137–150 the chain is Cytoplasmic; it reads TYMVKPTHGGCYIG. A helical transmembrane segment spans residues 151 to 171; sequence PIRFCLSVACTALIVLMAVFL. Residues 172 to 183 are Extracellular-facing; the sequence is KMNMKSISAICE. Residues 184–204 form a helical membrane-spanning segment; the sequence is WIVAMILFLLYGLFAVDFWHL. At 205–230 the chain is on the cytoplasmic side; that stretch reads DGHYFHVKKRTVIPNEMQVSTVTLSI.

It belongs to the DRAM/TMEM150 family.

The protein resides in the cell membrane. It is found in the endosome membrane. The protein localises to the cytoplasmic vesicle. Its subcellular location is the autophagosome membrane. Its function is as follows. Modulator of macroautophagy that causes accumulation of autophagosomes under basal conditions and enhances autophagic flux. Represses cell death and promotes long-term clonogenic survival of cells grown in the absence of glucose in a macroautophagy-independent manner. May have some role in extracellular matrix engulfment or growth factor receptor recycling, both of which can modulate cell survival. In Xenopus laevis (African clawed frog), this protein is Modulator of macroautophagy TMEM150B-A.